The following is a 1114-amino-acid chain: M-phase phosphoprotein 9 (1114 aa).

Disordered stretches follow at residues 1–55 (MEDF…KTGP), 106–161 (RPSC…DCHV), 183–207 (AKEP…VVQA), 267–301 (TSWA…WKPP), and 410–468 (VLEP…STIP). A compositionally biased stretch (polar residues) spans 24-51 (APQSLGLSLHANRSSPHLSTNGVSSFSG). Residues 106–119 (RPSCSSSSVSEQVS) show a composition bias toward low complexity. The span at 149–161 (QPASSTSYPDCHV) shows a compositional bias: polar residues. 2 stretches are compositionally biased toward polar residues: residues 267 to 280 (TSWA…QSKQ) and 429 to 446 (HNPS…TTRA). Residues 368–729 (LSQVLTLDPG…EAQVKQAEHE (362 aa)) form a required for its centrosomal localization region. The tract at residues 382-431 (KPKEHVAGIQAHGFLHALDDRISFSPDSVLEPSLSRHSDTDSSSQASHNP) is interaction with CEP97. The stretch at 574–733 (DRCGQLDSAL…KQAEHESMLS (160 aa)) forms a coiled coil. A Phosphoserine; by TTBK2 modification is found at Ser-710. Residue Lys-713 forms a Glycyl lysine isopeptide (Lys-Gly) (interchain with G-Cter in ubiquitin) linkage. The residue at position 717 (Ser-717) is a Phosphoserine; by TTBK2. Disordered regions lie at residues 727 to 755 (EHES…TSDV), 840 to 931 (SWGT…GFSH), and 975 to 1002 (EEKK…NGLK). The interaction with KIF24 stretch occupies residues 730 to 963 (SMLSLRNGAK…PVSTLQQTTA (234 aa)). Polar residues predominate over residues 852-868 (SKLVNSRQTEPSVNTGR). The segment covering 881–898 (QTSASQRSSSLPPSSRKA) has biased composition (low complexity). Ser-926 is subject to Phosphoserine. Basic and acidic residues predominate over residues 975-985 (EEKKYSEKNSD). The stretch at 1040-1105 (RTLAETERFF…GSVRMTLKKF (66 aa)) forms a coiled coil.

Interacts with CCP110, CEP97 and KIF24. In terms of processing, TTBK2-mediated phosphorylation at Ser-710 and Ser-717, promotes its ubiquitination at Lys-713 leading to proteasomal degradation, loss of MPHOSPH9 facilitates the removal of the CP110-CEP97 complex from the mother centrioles, promoting the initiation of ciliogenesis. Phosphorylated in M (mitotic) phase. Post-translationally, ubiquitinated at Lys-713, leading to proteasomal degradation.

It localises to the cytoplasm. The protein resides in the cytoskeleton. The protein localises to the microtubule organizing center. Its subcellular location is the centrosome. It is found in the centriole. It localises to the golgi apparatus membrane. Its function is as follows. Negatively regulates cilia formation by recruiting the CP110-CEP97 complex (a negative regulator of ciliogenesis) at the distal end of the mother centriole in ciliary cells. At the beginning of cilia formation, MPHOSPH9 undergoes TTBK2-mediated phosphorylation and degradation via the ubiquitin-proteasome system and removes itself and the CP110-CEP97 complex from the distal end of the mother centriole, which subsequently promotes cilia formation. This Mus musculus (Mouse) protein is M-phase phosphoprotein 9 (Mphosph9).